The following is a 75-amino-acid chain: Chaplin-D (75 aa).

An N-terminal signal peptide occupies residues 1 to 23 (MKKSAAVVAGAIMALGMAAPAFA). In terms of domain architecture, Chaplin spans 34–74 (SPGVLSGNVIQVPVHVPVNVCGNSINVVGLLNPAFGNKCEN). Residues C54 and C72 are joined by a disulfide bond.

The protein belongs to the chaplin family. Short chaplin subfamily.

It is found in the cell surface. It localises to the secreted. Its subcellular location is the cell wall. The protein resides in the fimbrium. Its function is as follows. One of 8 partially redundant surface-active proteins required for efficient formation of aerial mycelium; the short chaplins assemble into a hydrophobic, amyloidal fibrillar surface layer that envelopes and protects aerial hyphae and spores, presumably anchored to the long chaplins. Chaplins have an overlapping function with the surface-active SapB peptide; chaplins are essential on minimal medium while on rich medium both chaplins and SapB are required for efficient aerial hyphae formation. Chaplins are also involved in cell attachment to a hydrophobic surface. Forms amyloid fibrils in vitro probably composed of stacked beta-sheets, at low extracellular concentrations individually restores the ability to form aerial hyphae to a chaplin-deficient strain. A small chaplin extract (ChpD, ChpE, ChpF, ChpG and ChpH) self-assembles into 2 different amyloids; small fibrils at the air-water interface form an amphipathic membrane that resembles spore-surface structures involved in aerial hyphae formation, and hydrophilic fibrils in solution that resemble the fibers that attach cells to a hydrophobic surface. At the air-water interface the hydrophilic surface is in contact with water (probably equivalent to the peptidoglycan layer), while the hydrophobic face is exposed to the air, making the surface of the aerial hyphae hydrophobic. A minimal chaplin strain capable of forming aerial mycelium/hyphae on minimal medium contains ChpC, ChpE and ChpH. The strain also has restored rodlet formation on the hyphae surface. A second minimal chaplin strain with ChpA, ChpD and ChpE makes slightly less robust hyphae. A small chaplin extract applied to a chaplin-deficient strain restores aerial hyphae formation. The small chaplin extract forms an amyloid-like structure similar to that seen on the surface of cells without rodlets (rdlA-rdlB deletions), and is highly surface active, reducing surface tension from 72 to 26 mJ/m(2), which probably allows escape of hyphae from an aqueous environment into air. This chain is Chaplin-D, found in Streptomyces coelicolor (strain ATCC BAA-471 / A3(2) / M145).